The primary structure comprises 195 residues: 7-methyl-GTP pyrophosphatase (195 aa).

Asp70 acts as the Proton acceptor in catalysis.

The protein belongs to the Maf family. YceF subfamily. It depends on a divalent metal cation as a cofactor.

Its subcellular location is the cytoplasm. It carries out the reaction N(7)-methyl-GTP + H2O = N(7)-methyl-GMP + diphosphate + H(+). Nucleoside triphosphate pyrophosphatase that hydrolyzes 7-methyl-GTP (m(7)GTP). May have a dual role in cell division arrest and in preventing the incorporation of modified nucleotides into cellular nucleic acids. This Shewanella sp. (strain MR-7) protein is 7-methyl-GTP pyrophosphatase.